An 818-amino-acid chain; its full sequence is Serine/threonine-protein kinase PTK2/STK2 (818 aa).

The span at 28 to 39 shows a compositional bias: polar residues; it reads NSSSHTDNSSLL. 2 disordered regions span residues 28-100 and 117-177; these read NSSS…GSVS and NPYL…SHHF. T56 bears the Phosphothreonine mark. A compositionally biased stretch (low complexity) spans 57-81; sequence SPSISGSGSGGNSPSSSAGARQRSA. Residues S59 and S80 each carry the phosphoserine modification. Basic and acidic residues predominate over residues 136–160; sequence TRDRDRAVLDREKEKERARNKERNT. Residues 255–562 form the Protein kinase domain; that stretch reads DTDNKPIGSG…MDDLFNDPFF (308 aa). Residues 261 to 269 and K285 each bind ATP; that span reads IGSGGSSEV. D388 acts as the Proton acceptor in catalysis. Positions 585–595 are enriched in polar residues; the sequence is STSTNDFSENS. The segment at 585–795 is disordered; sequence STSTNDFSEN…SVSSSKKKKV (211 aa). 2 positions are modified to phosphoserine: S623 and S632. 2 stretches are compositionally biased toward basic and acidic residues: residues 638–651 and 659–685; these read KVKDSAKTKTHDVG and TKPKQQDKKENLKKDEVKNGDKDKVIE. S694 carries the post-translational modification Phosphoserine. T700 carries the phosphothreonine modification. S711 carries the post-translational modification Phosphoserine. Low complexity predominate over residues 727–736; it reads TPTTPTHNGP. Residue T737 is modified to Phosphothreonine. Phosphoserine is present on residues S752, S755, S778, and S781. Positions 755 to 767 are enriched in polar residues; that stretch reads SLKSETPASTKNF. Residues 768–789 are compositionally biased toward low complexity; the sequence is SAPNVSSSSNSLRSLGSPSVSS.

This sequence belongs to the protein kinase superfamily. Ser/Thr protein kinase family.

The protein resides in the nucleus. It is found in the cytoplasm. The catalysed reaction is L-seryl-[protein] + ATP = O-phospho-L-seryl-[protein] + ADP + H(+). The enzyme catalyses L-threonyl-[protein] + ATP = O-phospho-L-threonyl-[protein] + ADP + H(+). Its function is as follows. Essential determinant for high-affinity spermidine transport. Required for the activation of the plasma membrane proton pump PMA1 via phosphorylation of 'Ser-899'. This Saccharomyces cerevisiae (strain ATCC 204508 / S288c) (Baker's yeast) protein is Serine/threonine-protein kinase PTK2/STK2 (PTK2).